We begin with the raw amino-acid sequence, 209 residues long: MKDYKNELKVKVDLGENLRGSIPGLIKKVMYKTQYLEIQVEKKNLLPVLRFLKESSKYQCTMLLDIVCIDCLNIEEIKIGRFKIIYVLNSIYNNTRVHISTYVENNGIIETTSGLFESSVWLEREIWDMFGIYFEKHPDLRRILTDYGFVGYPLKKDFPITGYLEVYYDVADKKIIYKPIELMQEYRNYNFGAVWGDYERKVYLENIIK.

The protein belongs to the complex I 30 kDa subunit family. In terms of assembly, complex I is composed of about 30 different subunits.

It is found in the mitochondrion inner membrane. The catalysed reaction is a ubiquinone + NADH + 5 H(+)(in) = a ubiquinol + NAD(+) + 4 H(+)(out). Its function is as follows. Core subunit of the mitochondrial membrane respiratory chain NADH dehydrogenase (Complex I) that is believed to belong to the minimal assembly required for catalysis. Complex I functions in the transfer of electrons from NADH to the respiratory chain. The immediate electron acceptor for the enzyme is believed to be ubiquinone. This is NADH-ubiquinone oxidoreductase subunit 9 (nad9) from Dictyostelium citrinum (Slime mold).